We begin with the raw amino-acid sequence, 381 residues long: Homoserine O-succinyltransferase (381 aa).

Positions 45-360 (NAVLVCHALN…PHGHDAFLLD (316 aa)) constitute an AB hydrolase-1 domain. Ser151 acts as the Nucleophile in catalysis. Arg221 provides a ligand contact to substrate. Active-site residues include Asp321 and His354. Substrate is bound at residue Asp355.

It belongs to the AB hydrolase superfamily. MetX family. As to quaternary structure, homodimer.

It is found in the cytoplasm. The enzyme catalyses L-homoserine + succinyl-CoA = O-succinyl-L-homoserine + CoA. It functions in the pathway amino-acid biosynthesis; L-methionine biosynthesis via de novo pathway; O-succinyl-L-homoserine from L-homoserine: step 1/1. Its function is as follows. Transfers a succinyl group from succinyl-CoA to L-homoserine, forming succinyl-L-homoserine. The polypeptide is Homoserine O-succinyltransferase (Burkholderia cenocepacia (strain ATCC BAA-245 / DSM 16553 / LMG 16656 / NCTC 13227 / J2315 / CF5610) (Burkholderia cepacia (strain J2315))).